The sequence spans 226 residues: Enolase-phosphatase E1 (226 aa).

This sequence belongs to the HAD-like hydrolase superfamily. MasA/MtnC family. In terms of assembly, monomer. The cofactor is Mg(2+).

It carries out the reaction 5-methylsulfanyl-2,3-dioxopentyl phosphate + H2O = 1,2-dihydroxy-5-(methylsulfanyl)pent-1-en-3-one + phosphate. It participates in amino-acid biosynthesis; L-methionine biosynthesis via salvage pathway; L-methionine from S-methyl-5-thio-alpha-D-ribose 1-phosphate: step 3/6. It functions in the pathway amino-acid biosynthesis; L-methionine biosynthesis via salvage pathway; L-methionine from S-methyl-5-thio-alpha-D-ribose 1-phosphate: step 4/6. Bifunctional enzyme that catalyzes the enolization of 2,3-diketo-5-methylthiopentyl-1-phosphate (DK-MTP-1-P) into the intermediate 2-hydroxy-3-keto-5-methylthiopentenyl-1-phosphate (HK-MTPenyl-1-P), which is then dephosphorylated to form the acireductone 1,2-dihydroxy-3-keto-5-methylthiopentene (DHK-MTPene). The polypeptide is Enolase-phosphatase E1 (Shewanella baltica (strain OS195)).